Here is a 416-residue protein sequence, read N- to C-terminus: MEPISNVEDPNSSEGDEKRWPDGPKRKRKNSTCSVKSMSALSLSVQGYIPSYLEKDEPCVVCGDKATGYHYRCITCEGCKGFFRRTIQKNLHPAYSCKYDGCCIIDKITRNQCQLCRFRKCIAVCMAMDLVLDDSKRVAKRRLIEENREKRKKDEIVKTLQARPEPDSSEWELIRHVTEAHRHTNAQGSHWKQKRKFLPEDIGQSPRAPTPDGDKVDLEAFSEFTKIITPAITRVVDFAKKLPMFSELPCEDQIILLKGCCMEIMSLRAAVRYDPESETLTLSGEMAVKREQLKNGGLGVVSDAIFDLGKSLAQFNLDDSEVALLQAVLLMSSDRSGLTLVDKIEKCQETYLLAFEHYINHRKHNIPHFWPKLLMKVTDLRMIGACHASRFLHMKVECPNELFPPLFLEVFEDQEV.

Residues 1–30 (MEPISNVEDPNSSEGDEKRWPDGPKRKRKN) form a disordered region. A modulating region spans residues 1–58 (MEPISNVEDPNSSEGDEKRWPDGPKRKRKNSTCSVKSMSALSLSVQGYIPSYLEKDEP). Basic and acidic residues predominate over residues 15-24 (GDEKRWPDGP). Zn(2+)-binding residues include C59, C62, C76, C79, C97, C103, C113, and C116. NR C4-type zinc fingers lie at residues 59–79 (CVVC…CEGC) and 97–121 (CKYD…FRKC). Positions 59–133 (CVVCGDKATG…VCMAMDLVLD (75 aa)) form a DNA-binding region, nuclear receptor. In terms of domain architecture, NR LBD spans 169 to 413 (SEWELIRHVT…PPLFLEVFED (245 aa)). Residues R234 and S283 each contribute to the 3,3',5-triiodo-L-thyronine site.

The protein belongs to the nuclear hormone receptor family. NR1 subfamily.

It localises to the nucleus. In terms of biological role, nuclear hormone receptor that can act as a repressor or activator of transcription. High affinity receptor for thyroid hormones, including triiodothyronine and thyroxine. The protein is Thyroid hormone receptor alpha (thra1) of Salmo salar (Atlantic salmon).